The following is a 253-amino-acid chain: Phosphoadenosine 5'-phosphosulfate reductase (253 aa).

The active-site Nucleophile; cysteine thiosulfonate intermediate is Cys239.

It belongs to the PAPS reductase family. CysH subfamily.

Its subcellular location is the cytoplasm. The enzyme catalyses [thioredoxin]-disulfide + sulfite + adenosine 3',5'-bisphosphate + 2 H(+) = [thioredoxin]-dithiol + 3'-phosphoadenylyl sulfate. Its pathway is sulfur metabolism; hydrogen sulfide biosynthesis; sulfite from sulfate: step 3/3. In terms of biological role, catalyzes the formation of sulfite from phosphoadenosine 5'-phosphosulfate (PAPS) using thioredoxin as an electron donor. This Photobacterium profundum (strain SS9) protein is Phosphoadenosine 5'-phosphosulfate reductase.